The chain runs to 99 residues: Acylphosphatase (99 aa).

Residues 5–97 (VRQIVIRGRV…RPGERFSQLP (93 aa)) form the Acylphosphatase-like domain. Catalysis depends on residues Arg20 and Asn38.

It belongs to the acylphosphatase family.

The enzyme catalyses an acyl phosphate + H2O = a carboxylate + phosphate + H(+). The sequence is that of Acylphosphatase (acyP) from Nitrobacter hamburgensis (strain DSM 10229 / NCIMB 13809 / X14).